The chain runs to 226 residues: ATP synthase subunit a (226 aa).

The next 5 helical transmembrane spans lie at 20 to 40, 74 to 94, 100 to 120, 158 to 180, and 197 to 217; these read LNWLSTFLGLLLIPFSFWLLP, FISLFSLIMFNNFLGLFPYIF, LTLTLALAFPLWLSFMLYGWI, LAVRLTANMIAGHLLLTLLGNTG, and IALLVLESAVAIIQSYVFAVL.

It belongs to the ATPase A chain family. As to quaternary structure, F-type ATPases have 2 components, CF(1) - the catalytic core - and CF(0) - the membrane proton channel. CF(1) has five subunits: alpha(3), beta(3), gamma(1), delta(1), epsilon(1). CF(0) has three main subunits: a, b and c.

It localises to the mitochondrion inner membrane. Mitochondrial membrane ATP synthase (F(1)F(0) ATP synthase or Complex V) produces ATP from ADP in the presence of a proton gradient across the membrane which is generated by electron transport complexes of the respiratory chain. F-type ATPases consist of two structural domains, F(1) - containing the extramembraneous catalytic core and F(0) - containing the membrane proton channel, linked together by a central stalk and a peripheral stalk. During catalysis, ATP synthesis in the catalytic domain of F(1) is coupled via a rotary mechanism of the central stalk subunits to proton translocation. Key component of the proton channel; it may play a direct role in the translocation of protons across the membrane. The chain is ATP synthase subunit a (ATP6) from Anopheles quadrimaculatus (Common malaria mosquito).